The primary structure comprises 89 residues: Small ribosomal subunit protein uS17 (89 aa).

This sequence belongs to the universal ribosomal protein uS17 family. In terms of assembly, part of the 30S ribosomal subunit.

One of the primary rRNA binding proteins, it binds specifically to the 5'-end of 16S ribosomal RNA. The chain is Small ribosomal subunit protein uS17 from Coxiella burnetii (strain Dugway 5J108-111).